A 618-amino-acid polypeptide reads, in one-letter code: Glutamine--fructose-6-phosphate aminotransferase [isomerizing] (618 aa).

Cysteine 2 (nucleophile; for GATase activity) is an active-site residue. Residues 2–226 (CGIVGYAGRN…DFETAVLTPD (225 aa)) form the Glutamine amidotransferase type-2 domain. Residues 72 to 91 (WATHGRPSTENAHPHNSGGN) are disordered. SIS domains are found at residues 295–434 (NDDE…VRGK) and 467–608 (CAEN…IDKP). Lysine 613 (for Fru-6P isomerization activity) is an active-site residue.

As to quaternary structure, homodimer.

The protein localises to the cytoplasm. The catalysed reaction is D-fructose 6-phosphate + L-glutamine = D-glucosamine 6-phosphate + L-glutamate. Functionally, catalyzes the first step in hexosamine metabolism, converting fructose-6P into glucosamine-6P using glutamine as a nitrogen source. The protein is Glutamine--fructose-6-phosphate aminotransferase [isomerizing] of Methanosarcina mazei (strain ATCC BAA-159 / DSM 3647 / Goe1 / Go1 / JCM 11833 / OCM 88) (Methanosarcina frisia).